A 70-amino-acid chain; its full sequence is Large ribosomal subunit protein bL31 (70 aa).

Zn(2+)-binding residues include cysteine 17, cysteine 19, cysteine 37, and cysteine 40.

This sequence belongs to the bacterial ribosomal protein bL31 family. Type A subfamily. Part of the 50S ribosomal subunit. Requires Zn(2+) as cofactor.

Functionally, binds the 23S rRNA. The chain is Large ribosomal subunit protein bL31 from Clostridium acetobutylicum (strain ATCC 824 / DSM 792 / JCM 1419 / IAM 19013 / LMG 5710 / NBRC 13948 / NRRL B-527 / VKM B-1787 / 2291 / W).